The chain runs to 378 residues: Erythronate-4-phosphate dehydrogenase (378 aa).

Substrate contacts are provided by serine 45 and threonine 66. Residues aspartate 142 and threonine 169 each coordinate NAD(+). Arginine 202 is an active-site residue. Aspartate 226 contacts NAD(+). Residue glutamate 231 is part of the active site. The active-site Proton donor is the histidine 248. Glycine 251 contributes to the NAD(+) binding site. Tyrosine 252 is a substrate binding site.

Belongs to the D-isomer specific 2-hydroxyacid dehydrogenase family. PdxB subfamily. Homodimer.

Its subcellular location is the cytoplasm. It carries out the reaction 4-phospho-D-erythronate + NAD(+) = (R)-3-hydroxy-2-oxo-4-phosphooxybutanoate + NADH + H(+). It functions in the pathway cofactor biosynthesis; pyridoxine 5'-phosphate biosynthesis; pyridoxine 5'-phosphate from D-erythrose 4-phosphate: step 2/5. Catalyzes the oxidation of erythronate-4-phosphate to 3-hydroxy-2-oxo-4-phosphonooxybutanoate. This Cellvibrio japonicus (strain Ueda107) (Pseudomonas fluorescens subsp. cellulosa) protein is Erythronate-4-phosphate dehydrogenase.